The following is a 332-amino-acid chain: Ketol-acid reductoisomerase (NADP(+)) (332 aa).

The KARI N-terminal Rossmann domain maps to 4 to 184 (ARMYYDEDAD…GGTRAGILET (181 aa)). NADP(+) is bound by residues 27-30 (YGSQ), serine 53, serine 55, and 85-88 (DEVQ). Residue histidine 110 is part of the active site. Glycine 136 is a binding site for NADP(+). The region spanning 185–330 (TFREEAETDL…ADLRKMMSWL (146 aa)) is the KARI C-terminal knotted domain. Positions 193, 197, 229, and 233 each coordinate Mg(2+). Serine 254 contacts substrate.

The protein belongs to the ketol-acid reductoisomerase family. It depends on Mg(2+) as a cofactor.

The catalysed reaction is (2R)-2,3-dihydroxy-3-methylbutanoate + NADP(+) = (2S)-2-acetolactate + NADPH + H(+). The enzyme catalyses (2R,3R)-2,3-dihydroxy-3-methylpentanoate + NADP(+) = (S)-2-ethyl-2-hydroxy-3-oxobutanoate + NADPH + H(+). The protein operates within amino-acid biosynthesis; L-isoleucine biosynthesis; L-isoleucine from 2-oxobutanoate: step 2/4. Its pathway is amino-acid biosynthesis; L-valine biosynthesis; L-valine from pyruvate: step 2/4. In terms of biological role, involved in the biosynthesis of branched-chain amino acids (BCAA). Catalyzes an alkyl-migration followed by a ketol-acid reduction of (S)-2-acetolactate (S2AL) to yield (R)-2,3-dihydroxy-isovalerate. In the isomerase reaction, S2AL is rearranged via a Mg-dependent methyl migration to produce 3-hydroxy-3-methyl-2-ketobutyrate (HMKB). In the reductase reaction, this 2-ketoacid undergoes a metal-dependent reduction by NADPH to yield (R)-2,3-dihydroxy-isovalerate. The protein is Ketol-acid reductoisomerase (NADP(+)) of Gloeobacter violaceus (strain ATCC 29082 / PCC 7421).